Here is a 333-residue protein sequence, read N- to C-terminus: DNA-directed RNA polymerase subunit alpha (333 aa).

Residues 1–234 (MQISVNEFLT…QQLAAFVDLK (234 aa)) are alpha N-terminal domain (alpha-NTD). An alpha C-terminal domain (alpha-CTD) region spans residues 248 to 333 (IDPILLRPVD…SLKKDDKATA (86 aa)).

The protein belongs to the RNA polymerase alpha chain family. Homodimer. The RNAP catalytic core consists of 2 alpha, 1 beta, 1 beta' and 1 omega subunit. When a sigma factor is associated with the core the holoenzyme is formed, which can initiate transcription.

The enzyme catalyses RNA(n) + a ribonucleoside 5'-triphosphate = RNA(n+1) + diphosphate. DNA-dependent RNA polymerase catalyzes the transcription of DNA into RNA using the four ribonucleoside triphosphates as substrates. The sequence is that of DNA-directed RNA polymerase subunit alpha from Ectopseudomonas mendocina (strain ymp) (Pseudomonas mendocina).